We begin with the raw amino-acid sequence, 483 residues long: Glycogen synthase kinase-3 alpha (483 aa).

Positions 1-15 are enriched in gly residues; sequence MSGGGPSGGGPGGSG. The interval 1-96 is disordered; that stretch reads MSGGGPSGGG…PPPGVKLGRD (96 aa). S2 is modified (N-acetylserine). S2 carries the post-translational modification Phosphoserine. A Phosphoserine; by PKB/AKT1 modification is found at S21. Positions 25-82 are enriched in gly residues; that stretch reads PGGGGGGGGGGPGGSASGPGGTGGGKASVGAMGGGVGASSSGGGPGGSGGGGSGGPGA. A phosphoserine mark is found at S72, S77, and S97. The region spanning 119–403 is the Protein kinase domain; sequence YTDIKVIGNG…PLEACAHSFF (285 aa). Residues 125 to 133 and K148 each bind ATP; that span reads IGNGSFGVV. The active-site Proton acceptor is D244. Y279 is modified (phosphotyrosine). The segment at 449–483 is disordered; that stretch reads AGTTTLTPSSQALTETPTSSDWQSTDATPTLTNSS.

The protein belongs to the protein kinase superfamily. CMGC Ser/Thr protein kinase family. GSK-3 subfamily. Monomer. Interacts with ARRB2. Interacts with AXIN1 and CTNNB1/beta-catenin. Interacts with CTNND2. Interacts with LMBR1L. Interacts with DDX3X. Interacts with TNFRSF10B. Interacts with RICTOR; the interaction results in phosphorylation of RICTOR at 'Thr-1695' by GSK3A which facilitates FBXW7-mediated ubiquitination and subsequent degradation of RICTOR. In terms of assembly, (Microbial infection) Interacts with M.tuberculosis PtpA. Phosphorylated by AKT1 at Ser-21: upon insulin-mediated signaling, the activated PKB/AKT1 protein kinase phosphorylates and deactivates GSK3A, resulting in the dephosphorylation and activation of GYS1. Activated by phosphorylation at Tyr-279. In terms of processing, (Microbial infection) Dephosphorylated at Tyr-279 by M.tuberculosis PtpA, which leads to prevention of apoptosis during early stages of microbial infection.

The catalysed reaction is L-seryl-[tau protein] + ATP = O-phospho-L-seryl-[tau protein] + ADP + H(+). The enzyme catalyses L-threonyl-[tau protein] + ATP = O-phospho-L-threonyl-[tau protein] + ADP + H(+). It carries out the reaction L-seryl-[protein] + ATP = O-phospho-L-seryl-[protein] + ADP + H(+). It catalyses the reaction L-threonyl-[protein] + ATP = O-phospho-L-threonyl-[protein] + ADP + H(+). Activated by phosphorylation at Tyr-279. In response to insulin, inhibited by phosphorylation at Ser-21 by PKB/AKT1; phosphorylation at this site causes a conformational change, preventing access of substrates to the active site. Inhibited by lithium. Functionally, constitutively active protein kinase that acts as a negative regulator in the hormonal control of glucose homeostasis, Wnt signaling and regulation of transcription factors and microtubules, by phosphorylating and inactivating glycogen synthase (GYS1 or GYS2), CTNNB1/beta-catenin, APC and AXIN1. Requires primed phosphorylation of the majority of its substrates. Contributes to insulin regulation of glycogen synthesis by phosphorylating and inhibiting GYS1 activity and hence glycogen synthesis. Regulates glycogen metabolism in liver, but not in muscle. May also mediate the development of insulin resistance by regulating activation of transcription factors. In Wnt signaling, regulates the level and transcriptional activity of nuclear CTNNB1/beta-catenin. Facilitates amyloid precursor protein (APP) processing and the generation of APP-derived amyloid plaques found in Alzheimer disease. May be involved in the regulation of replication in pancreatic beta-cells. Is necessary for the establishment of neuronal polarity and axon outgrowth. Through phosphorylation of the anti-apoptotic protein MCL1, may control cell apoptosis in response to growth factors deprivation. Acts as a regulator of autophagy by mediating phosphorylation of KAT5/TIP60 under starvation conditions which activates KAT5/TIP60 acetyltransferase activity and promotes acetylation of key autophagy regulators, such as ULK1 and RUBCNL/Pacer. Negatively regulates extrinsic apoptotic signaling pathway via death domain receptors. Promotes the formation of an anti-apoptotic complex, made of DDX3X, BRIC2 and GSK3B, at death receptors, including TNFRSF10B. The anti-apoptotic function is most effective with weak apoptotic signals and can be overcome by stronger stimulation. Phosphorylates mTORC2 complex component RICTOR at 'Thr-1695' which facilitates FBXW7-mediated ubiquitination and subsequent degradation of RICTOR. The sequence is that of Glycogen synthase kinase-3 alpha (GSK3A) from Homo sapiens (Human).